The primary structure comprises 260 residues: Ribosomal RNA small subunit methyltransferase A (260 aa).

S-adenosyl-L-methionine-binding residues include Asn16, Leu18, Gly43, Glu64, Asp86, and Asn108.

It belongs to the class I-like SAM-binding methyltransferase superfamily. rRNA adenine N(6)-methyltransferase family. RsmA subfamily.

It localises to the cytoplasm. It catalyses the reaction adenosine(1518)/adenosine(1519) in 16S rRNA + 4 S-adenosyl-L-methionine = N(6)-dimethyladenosine(1518)/N(6)-dimethyladenosine(1519) in 16S rRNA + 4 S-adenosyl-L-homocysteine + 4 H(+). Functionally, specifically dimethylates two adjacent adenosines (A1518 and A1519) in the loop of a conserved hairpin near the 3'-end of 16S rRNA in the 30S particle. May play a critical role in biogenesis of 30S subunits. The sequence is that of Ribosomal RNA small subunit methyltransferase A from Buchnera aphidicola subsp. Baizongia pistaciae (strain Bp).